The sequence spans 1180 residues: MVPRRPASLEVTVACIWLLTVILGFCVSFNVDVKNSMSFSGPVEDMFGYTVQQYENEEGKWVLIGSPLVGQPKARTGDVYKCPVGRERAMPCVKLDLPVNTSIPNVTEIKENMTFGSTLVTNPNGGFLACGPLYAYRCGHLHYTTGICSDVSPTFQVVNSFAPVQECSTQLDIVIVLDGSNSIYPWESVIAFLNDLLKRMDIGPKQTQVGIVQYGENVTHEFNLNKYSSTEEVLVAANKIGRQGGLQTMTALGIDTARKEAFTEARGARRGVKKVMVIVTDGESHDNYRLKQVIQDCEDENIQRFSIAILGHYNRGNLSTEKFVEEIKSIASEPTEKHFFNVSDELALVTIVKALGERIFALEATADQSAASFEMEMSQTGFSAHYSQDWVMLGAVGAYDWNGTVVMQKANQMVIPHNTTFQTEPAKMNEPLASYLGYTVNSATIPGDVLYIAGQPRYNHTGQVVIYKMEDGNINILQTLGGEQIGSYFGSVLTTIDIDKDSYTDLLLVGAPMYMGTEKEEQGKVYVYAVNQTRFEYQMSLEPIRQTCCSSLKDNSCTKENKNEPCGARFGTAIAAVKDLNVDGFNDVVIGAPLEDDHAGAVYIYHGSGKTIREAYAQRIPSGGDGKTLKFFGQSIHGEMDLNGDGLTDVTIGGLGGAALFWARDVAVVKVTMNFEPNKVNIQKKNCRVEGKETVCINATMCFHVKLKSKEDSIYEADLQYRVTLDSLRQISRSFFSGTQERKIQRNITVRESECIRHSFYMLDKHDFQDSVRVTLDFNLTDPENGPVLDDALPNSVHEHIPFAKDCGNKERCISDLTLNVSTTEKSLLIVKSQHDKFNVSLTVKNKGDSAYNTRTVVQHSPNLIFSGIEEIQKDSCESNQNITCRVGYPFLRAGETVTFKIIFQFNTSHLSENAIIHLSATSDSEEPLESLNDNEVNISIPVKYEVGLQFYSSASEHHISVAANETIPEFINSTEDIGNEINVFYTIRKRGHFPMPELQLSISFPNLTADGYPVLYPIGWSSSDNVNCRPRSLEDPFGINSGKKMTISKSEVLKRGTIQDCSSTCGVATITCSLLPSDLSQVNVSLLLWKPTFIRAHFSSLNLTLRGELKSENSSLTLSSSNRKRELAIQISKDGLPGRVPLWVILLSAFAGLLLLMLLILALWKIGFFKRPLKKKMEK.

The signal sequence occupies residues 1–28; sequence MVPRRPASLEVTVACIWLLTVILGFCVS. Over 29 to 1142 the chain is Extracellular; it reads FNVDVKNSMS…SKDGLPGRVP (1114 aa). The FG-GAP 1 repeat unit spans residues 30–91; that stretch reads NVDVKNSMSF…CPVGRERAMP (62 aa). Cys-82 and Cys-92 are disulfide-bonded. Asn-100, Asn-105, Asn-112, Asn-217, Asn-317, Asn-341, Asn-402, Asn-418, and Asn-459 each carry an N-linked (GlcNAc...) asparagine glycan. An FG-GAP 2 repeat occupies 101–160; the sequence is TSIPNVTEIKENMTFGSTLVTNPNGGFLACGPLYAYRCGHLHYTTGICSDVSPTFQVVNS. One can recognise a VWFA domain in the interval 175–364; that stretch reads IVLDGSNSIY…LGERIFALEA (190 aa). An FG-GAP 3 repeat occupies 365 to 417; sequence TADQSAASFEMEMSQTGFSAHYSQDWVMLGAVGAYDWNGTVVMQKANQMVIPH. FG-GAP repeat units lie at residues 422–474, 475–537, 556–614, and 618–678; these read QTEP…DGNI, NILQ…RFEY, SCTK…TIRE, and QRIP…FEPN. Ca(2+) is bound by residues Asp-497, Asp-499, Asp-501, and Asp-505. Asn-531 carries an N-linked (GlcNAc...) asparagine glycan. Residues Asp-579, Asn-581, Asp-583, Asp-587, Asp-641, Asn-643, Asp-645, and Asp-649 each coordinate Ca(2+). An intrachain disulfide couples Cys-687 to Cys-696. 3 N-linked (GlcNAc...) asparagine glycosylation sites follow: Asn-698, Asn-747, and Asn-779. Cysteines 702 and 755 form a disulfide. Cys-807 and Cys-813 are disulfide-bonded. N-linked (GlcNAc...) asparagine glycans are attached at residues Asn-820, Asn-839, Asn-882, Asn-907, Asn-938, Asn-965, Asn-973, and Asn-1007. Cys-877 and Cys-885 are disulfide-bonded. Intrachain disulfides connect Cys-1029-Cys-1062 and Cys-1066-Cys-1073. Asn-1084, Asn-1103, and Asn-1114 each carry an N-linked (GlcNAc...) asparagine glycan. Residues 1143–1165 traverse the membrane as a helical segment; the sequence is LWVILLSAFAGLLLLMLLILALW. Over 1166–1180 the chain is Cytoplasmic; that stretch reads KIGFFKRPLKKKMEK. A GFFKR motif motif is present at residues 1168-1172; the sequence is GFFKR.

The protein belongs to the integrin alpha chain family. In terms of assembly, heterodimer of an alpha and a beta subunit. Alpha-1 associates with beta-1. Interacts with RAB21. Interacts (via cytoplasmic domain) with PTPN2; activates PTPN2 phosphatase activity towards EGFR and negatively regulates EGF signaling.

Its subcellular location is the membrane. Integrin alpha-1/beta-1 is a receptor for laminin and collagen. It recognizes the proline-hydroxylated sequence G-F-P-G-E-R in collagen. Involved in anchorage-dependent, negative regulation of EGF-stimulated cell growth. This Rattus norvegicus (Rat) protein is Integrin alpha-1 (Itga1).